The sequence spans 275 residues: Large ribosomal subunit protein uL2 (275 aa).

Disordered regions lie at residues 28-59 (KPYA…GGHK) and 224-275 (AMNP…RHKR). Over residues 35 to 46 (DTQSSTAGRNNN) the composition is skewed to polar residues. Residues 50-59 (TTRHKGGGHK) show a composition bias toward basic residues.

It belongs to the universal ribosomal protein uL2 family. Part of the 50S ribosomal subunit. Forms a bridge to the 30S subunit in the 70S ribosome.

Functionally, one of the primary rRNA binding proteins. Required for association of the 30S and 50S subunits to form the 70S ribosome, for tRNA binding and peptide bond formation. It has been suggested to have peptidyltransferase activity; this is somewhat controversial. Makes several contacts with the 16S rRNA in the 70S ribosome. The chain is Large ribosomal subunit protein uL2 from Paraburkholderia phymatum (strain DSM 17167 / CIP 108236 / LMG 21445 / STM815) (Burkholderia phymatum).